Consider the following 494-residue polypeptide: Probable serine/threonine-protein kinase BSK3 (494 aa).

Residue G2 is the site of N-myristoyl glycine attachment. Positions E61–Q316 constitute a Protein kinase domain. ATP contacts are provided by residues H67 to V75 and K89. Catalysis depends on D183, which acts as the Proton acceptor. 2 positions are modified to phosphoserine: S213 and S215. Residues P423–W456 form a TPR repeat.

In terms of assembly, interacts with BRI1 and BSL1. Phosphorylated at Ser-213 and Ser-215 by BRI1. Phosphorylation at Ser-215 is required for its function in the regulation of brassinosteroid signaling. Phosphorylation by BRI1 disrupts the interaction between its TPR and kinase domains, thereby increasing the binding between its kinase domain and BSL1.

It is found in the cell membrane. The enzyme catalyses L-seryl-[protein] + ATP = O-phospho-L-seryl-[protein] + ADP + H(+). It catalyses the reaction L-threonyl-[protein] + ATP = O-phospho-L-threonyl-[protein] + ADP + H(+). In terms of biological role, probable serine/threonine kinase that acts as a positive regulator of brassinosteroid (BR) signaling downstream of BRI1. In Oryza sativa subsp. japonica (Rice), this protein is Probable serine/threonine-protein kinase BSK3.